A 55-amino-acid chain; its full sequence is Small ribosomal subunit protein bS21 (55 aa).

It belongs to the bacterial ribosomal protein bS21 family.

The polypeptide is Small ribosomal subunit protein bS21 (Phytoplasma mali (strain AT)).